The sequence spans 226 residues: Imidazole glycerol phosphate synthase subunit HisH (226 aa).

Residues 6–214 (NIALVDYGVG…VERAASRSAA (209 aa)) form the Glutamine amidotransferase type-1 domain. The Nucleophile role is filled by C84. Residues H189 and E191 contribute to the active site.

Heterodimer of HisH and HisF.

The protein localises to the cytoplasm. It catalyses the reaction 5-[(5-phospho-1-deoxy-D-ribulos-1-ylimino)methylamino]-1-(5-phospho-beta-D-ribosyl)imidazole-4-carboxamide + L-glutamine = D-erythro-1-(imidazol-4-yl)glycerol 3-phosphate + 5-amino-1-(5-phospho-beta-D-ribosyl)imidazole-4-carboxamide + L-glutamate + H(+). It carries out the reaction L-glutamine + H2O = L-glutamate + NH4(+). The protein operates within amino-acid biosynthesis; L-histidine biosynthesis; L-histidine from 5-phospho-alpha-D-ribose 1-diphosphate: step 5/9. IGPS catalyzes the conversion of PRFAR and glutamine to IGP, AICAR and glutamate. The HisH subunit catalyzes the hydrolysis of glutamine to glutamate and ammonia as part of the synthesis of IGP and AICAR. The resulting ammonia molecule is channeled to the active site of HisF. This is Imidazole glycerol phosphate synthase subunit HisH from Gloeobacter violaceus (strain ATCC 29082 / PCC 7421).